The sequence spans 164 residues: Protein SprT (164 aa).

The region spanning 14-156 is the SprT-like domain; that stretch reads QLAESFFKRP…LCRRCRNTLV (143 aa). Position 69 (His69) interacts with Zn(2+). Glu70 is an active-site residue. His73 lines the Zn(2+) pocket.

It belongs to the SprT family. Zn(2+) is required as a cofactor.

The protein localises to the cytoplasm. The sequence is that of Protein SprT from Pseudomonas fluorescens (strain Pf0-1).